The chain runs to 182 residues: CDP-diacylglycerol--glycerol-3-phosphate 3-phosphatidyltransferase (182 aa).

Over 1 to 12 the chain is Cytoplasmic; the sequence is MQLNIPTWLTLF. Residues 13 to 37 traverse the membrane as a helical segment; sequence RVVMIPFFVLAFYLPFKWAPLCCAL. Residues 38–60 lie on the Periplasmic side of the membrane; it reads IFVLAAVTDWFDGFLARRWKQTT. The helical transmembrane segment at 61–81 threads the bilayer; it reads RFGAFLDPVADKVMVAMALVL. Residues 82–86 are Cytoplasmic-facing; that stretch reads VAEHF. A helical transmembrane segment spans residues 87-107; the sequence is HSWWITLPAATMIAREIIISA. Over 108–145 the chain is Periplasmic; sequence LREWMAEIGKRSSVAVSWIGKVKTTAQMLALVTLLWRP. A helical transmembrane segment spans residues 146-168; it reads DDIVSGIGIAALYVAAVLTFWSM. Topologically, residues 169–181 are cytoplasmic; the sequence is FQYLYAARHDLFE.

This sequence belongs to the CDP-alcohol phosphatidyltransferase class-I family.

The protein resides in the cell inner membrane. The enzyme catalyses a CDP-1,2-diacyl-sn-glycerol + sn-glycerol 3-phosphate = a 1,2-diacyl-sn-glycero-3-phospho-(1'-sn-glycero-3'-phosphate) + CMP + H(+). The protein operates within phospholipid metabolism; phosphatidylglycerol biosynthesis; phosphatidylglycerol from CDP-diacylglycerol: step 1/2. Functionally, catalyzes the conversion of cytidine diphosphate diacylglycerol (CDP-DG) and glycerol 3-phosphate into phosphatidylglycerol. Essential for the synthesis of anionic phospholipids, thereby playing a role in balancing the ratio of zwitterionic and anionic phospholipids, which is thought to be important for normal membrane function. The chain is CDP-diacylglycerol--glycerol-3-phosphate 3-phosphatidyltransferase from Sodalis glossinidius (strain morsitans).